We begin with the raw amino-acid sequence, 580 residues long: Protein O-linked-mannose beta-1,4-N-acetylglucosaminyltransferase 2 (580 aa).

Residues 1–4 (MHLS) lie on the Cytoplasmic side of the membrane. The chain crosses the membrane as a helical; Signal-anchor for type II membrane protein span at residues 5 to 25 (AVLNALLVSVLAAVLWKHVRL). Over 26–580 (REHAASLEEE…PFADVLVCST (555 aa)) the chain is Lumenal. Residues Asn-99 and Asn-276 are each glycosylated (N-linked (GlcNAc...) asparagine). Residues 488–580 (ARCQASVQGA…PFADVLVCST (93 aa)) enclose the Fibronectin type-III domain.

It belongs to the glycosyltransferase 61 family.

The protein localises to the endoplasmic reticulum membrane. It carries out the reaction 3-O-(alpha-D-mannosyl)-L-threonyl-[protein] + UDP-N-acetyl-alpha-D-glucosamine = 3-O-(N-acetyl-beta-D-glucosaminyl-(1-&gt;4)-alpha-D-mannosyl)-L-threonyl-[protein] + UDP + H(+). It functions in the pathway protein modification; protein glycosylation. Functionally, O-linked mannose beta-1,4-N-acetylglucosaminyltransferase that transfers UDP-N-acetyl-D-glucosamine to the 4-position of the mannose to generate N-acetyl-D-glucosamine-beta-1,4-O-D-mannosylprotein. Involved in the biosynthesis of the phosphorylated O-mannosyl trisaccharide (N-acetylgalactosamine-beta-3-N-acetylglucosamine-beta-4-(phosphate-6-)mannose), a carbohydrate structure present in alpha-dystroglycan (DAG1), which is required for binding laminin G-like domain-containing extracellular proteins with high affinity. In Bos taurus (Bovine), this protein is Protein O-linked-mannose beta-1,4-N-acetylglucosaminyltransferase 2 (POMGNT2).